The chain runs to 366 residues: UPF0329 protein ECU01_0130/ECU01_1480/ECU08_0060 (366 aa).

The interval 325 to 366 is disordered; the sequence is IRKEEKRIRKEEERAKNEEELLRMVESEEGKSGEGEEGCRRG.

This sequence belongs to the UPF0329 family.

This chain is UPF0329 protein ECU01_0130/ECU01_1480/ECU08_0060, found in Encephalitozoon cuniculi (strain GB-M1) (Microsporidian parasite).